Consider the following 124-residue polypeptide: Large ribosomal subunit protein eL31 (124 aa).

It belongs to the eukaryotic ribosomal protein eL31 family.

The sequence is that of Large ribosomal subunit protein eL31 (RpL31) from Spodoptera frugiperda (Fall armyworm).